Here is a 396-residue protein sequence, read N- to C-terminus: Cysteine desulfurase (396 aa).

Pyridoxal 5'-phosphate-binding positions include 71-72, asparagine 148, glutamine 176, and 196-198; these read GT and SGH. Lysine 199 carries the post-translational modification N6-(pyridoxal phosphate)lysine. Threonine 231 lines the pyridoxal 5'-phosphate pocket. Catalysis depends on cysteine 319, which acts as the Cysteine persulfide intermediate. Cysteine 319 provides a ligand contact to [2Fe-2S] cluster.

This sequence belongs to the class-V pyridoxal-phosphate-dependent aminotransferase family. NifS/IscS subfamily. In terms of assembly, homodimer. Pyridoxal 5'-phosphate is required as a cofactor.

It carries out the reaction (sulfur carrier)-H + L-cysteine = (sulfur carrier)-SH + L-alanine. Catalyzes the removal of elemental sulfur atoms from cysteine to produce alanine. Seems to participate in the biosynthesis of the nitrogenase metalloclusters by providing the inorganic sulfur required for the Fe-S core formation. In Azotobacter chroococcum mcd 1, this protein is Cysteine desulfurase.